A 283-amino-acid polypeptide reads, in one-letter code: Thymidylate synthase (283 aa).

Position 22 (Arg22) interacts with dUMP. Cys160 functions as the Nucleophile in the catalytic mechanism. DUMP-binding positions include 180 to 183, Asn191, and 221 to 223; these read RSCD and HIY. Residue Asp183 coordinates (6R)-5,10-methylene-5,6,7,8-tetrahydrofolate. Ser282 provides a ligand contact to (6R)-5,10-methylene-5,6,7,8-tetrahydrofolate.

The protein belongs to the thymidylate synthase family. Bacterial-type ThyA subfamily. In terms of assembly, homodimer.

The protein resides in the cytoplasm. The enzyme catalyses dUMP + (6R)-5,10-methylene-5,6,7,8-tetrahydrofolate = 7,8-dihydrofolate + dTMP. The protein operates within pyrimidine metabolism; dTTP biosynthesis. Functionally, catalyzes the reductive methylation of 2'-deoxyuridine-5'-monophosphate (dUMP) to 2'-deoxythymidine-5'-monophosphate (dTMP) while utilizing 5,10-methylenetetrahydrofolate (mTHF) as the methyl donor and reductant in the reaction, yielding dihydrofolate (DHF) as a by-product. This enzymatic reaction provides an intracellular de novo source of dTMP, an essential precursor for DNA biosynthesis. The sequence is that of Thymidylate synthase from Vibrio atlanticus (strain LGP32) (Vibrio splendidus (strain Mel32)).